We begin with the raw amino-acid sequence, 475 residues long: uncharacterized protein (475 aa).

Residues 19-39 form a helical membrane-spanning segment; sequence LVSAILILSILIWLIITIFFA.

It is found in the membrane. This is an uncharacterized protein from Mycoplasma pneumoniae (strain ATCC 29342 / M129 / Subtype 1) (Mycoplasmoides pneumoniae).